The sequence spans 279 residues: Putative Delta(7)-sterol-C5(6)-desaturase 2 (279 aa).

A run of 2 helical transmembrane segments spans residues 48–68 and 127–147; these read LAGNILYFISGFLWCFYIYYL and FLCFLYIALYLVLVEFMIYWV. The Fatty acid hydroxylase domain maps to 134–263; that stretch reads ALYLVLVEFM…TIWMDWMFGS (130 aa). The Histidine box-1 signature appears at 148–152; sequence HKELH. A Histidine box-2 motif is present at residues 162 to 166; sequence HATHH. The helical transmembrane segment at 194–214 threads the bilayer; sequence HVIALFIVPIHLITHLSLLFL. Residues 239-243 carry the Histidine box-3 motif; sequence HTIHH.

It belongs to the sterol desaturase family. It depends on Fe cation as a cofactor.

It localises to the endoplasmic reticulum membrane. It catalyses the reaction a Delta(7)-sterol + 2 Fe(II)-[cytochrome b5] + O2 + 2 H(+) = a Delta(5),Delta(7)-sterol + 2 Fe(III)-[cytochrome b5] + 2 H2O. This chain is Putative Delta(7)-sterol-C5(6)-desaturase 2 (HDF7), found in Arabidopsis thaliana (Mouse-ear cress).